The chain runs to 129 residues: Small ribosomal subunit protein uS9 (129 aa).

Belongs to the universal ribosomal protein uS9 family.

The sequence is that of Small ribosomal subunit protein uS9 from Chlorobium phaeovibrioides (strain DSM 265 / 1930) (Prosthecochloris vibrioformis (strain DSM 265)).